A 144-amino-acid polypeptide reads, in one-letter code: Apidaecins type 22 (144 aa).

An N-terminal signal peptide occupies residues 1-19 (MKNFALAILVVTFVVAVFG). Propeptides lie at residues 20-42 (NTNL…EAEP), 63-70 (EAEPEAEP), 91-98 (EAEPEAEP), and 119-126 (EAEPEAEP). Residues 20–144 (NTNLDPPTRP…PQPRPPHPRI (125 aa)) are disordered. A compositionally biased stretch (pro residues) spans 134 to 144 (IPQPRPPHPRI).

This sequence belongs to the apidaecin family.

The protein localises to the secreted. Its function is as follows. Apidaecins have bactericidal activity; predominantly against Gram-negative bacteria. They seem to interfere with cell propagation. This chain is Apidaecins type 22, found in Apis mellifera (Honeybee).